The chain runs to 2845 residues: Adenomatous polyposis coli protein (2845 aa).

Alanine 2 carries the post-translational modification N-acetylalanine. A coiled-coil region spans residues 2–61 (AAASYDQLLKQVEALKMENSNLRQELEDNSNHLTKLETEASNMKEVLKQLQGSIEDETMT). Residues serine 105 and serine 109 each carry the phosphoserine modification. Residues 125–245 (SRESTGYLEE…QAAEAERSSQ (121 aa)) are a coiled coil. The tract at residues 238 to 304 (AEAERSSQSR…THSAPRRLTS (67 aa)) is disordered. Residues 239 to 263 (EAERSSQSRHDAASHEAGRQHEGHG) show a composition bias toward basic and acidic residues. Residues 266 to 279 (ESNTAASSSGQSPA) show a composition bias toward polar residues. ARM repeat units lie at residues 451–493 (LMKL…HYSV), 503–545 (LTNL…IASV), 546–589 (LRNL…VLSA), 590–636 (LWNL…GGGI), 637–681 (LRNV…ACGT), 682–723 (LWNL…SAAA), and 724–765 (LRNL…LDAQ). Phosphoserine is present on residues serine 742, serine 746, and serine 778. Positions 828 to 873 (VLPSSSSSRGSLDSSRSEKDRSLERERGIGLSAYHPTTENAGTSSK) are disordered. The span at 831 to 841 (SSSSSRGSLDS) shows a compositional bias: low complexity. Residues 842-855 (SRSEKDRSLERERG) are compositionally biased toward basic and acidic residues. Residues 862 to 873 (HPTTENAGTSSK) show a composition bias toward polar residues. Serine 906 carries the post-translational modification Phosphoserine. Disordered stretches follow at residues 921–942 (RRSS…ENSN) and 956–986 (RSSN…SYSE). Residues 927–942 (HTHSNTYNFTKSENSN) are compositionally biased toward polar residues. Residues 959–969 (NDSLNSVTSSD) show a composition bias toward low complexity. 3 positions are modified to phosphoserine: serine 985, serine 1036, and serine 1040. An interaction with catenins region spans residues 1018–1168 (ELDTPINYSL…TNYSIKYNEE (151 aa)). Disordered stretches follow at residues 1058-1079 (IKQN…YSEN), 1092-1168 (GQQE…YNEE), 1189-1247 (SQKP…GTTC), and 1307-1375 (ENDV…PEHY). Polar residues-rich tracts occupy residues 1066 to 1078 (ARSQ…VYSE) and 1103 to 1128 (RGTS…QSLC). Positions 1189 to 1204 (SQKPSFSFSKNSSAQS) are enriched in low complexity. The span at 1211-1245 (SPSSENTAVPPSNAKRQNQLRPSSAQRNGQTQKGT) shows a compositional bias: polar residues. A compositionally biased stretch (low complexity) spans 1354–1365 (SSGAKSPSKSGA). Phosphoserine is present on residues serine 1359, serine 1370, serine 1384, serine 1391, and serine 1394. Disordered regions lie at residues 1400 to 1474 (IASS…VNAA), 1525 to 1568 (PPVQ…SDDD), 1587 to 1606 (RKAK…VARK), 1746 to 2010 (DQVQ…APKS), and 2042 to 2069 (ISSA…KVGG). Threonine 1437 bears the Phosphothreonine mark. Over residues 1447–1465 (AKREVPKSKVPAAEKRESG) the composition is skewed to basic and acidic residues. Positions 1532-1546 (NGNETESEQPEESNE) are enriched in acidic residues. Positions 1547–1562 (NQDKEVEKPDSEKDLL) are enriched in basic and acidic residues. Serine 1565 carries the post-translational modification Phosphoserine. A compositionally biased stretch (polar residues) spans 1747–1762 (QVQQASSTSSGANKNQ). A Phosphoserine modification is found at serine 1772. The segment covering 1783–1792 (YRTRVRKNTD) has biased composition (basic and acidic residues). Serine 1859, serine 1861, and serine 1862 each carry phosphoserine. The tract at residues 1864–1891 (DFDDDDVDLSREKAELRKGKESKDSEAK) is highly charged. Positions 1871–1894 (DLSREKAELRKGKESKDSEAKVTC) are enriched in basic and acidic residues. Residues 1900 to 1911 (SSQQAASKSQAS) are compositionally biased toward low complexity. Residues 1927 to 1936 (KQPTFPQSSK) show a composition bias toward polar residues. A compositionally biased stretch (basic and acidic residues) spans 1937–1949 (DGPDRGAATDEKL). Phosphoserine is present on residues serine 1969 and serine 1971. A compositionally biased stretch (basic and acidic residues) spans 1979–1990 (NNKESEPIKEAE). The interaction with AXIN1 stretch occupies residues 2034–2058 (EDDLLQECISSAMPKKKRPSRLKSE). A phosphoserine mark is found at serine 2087, serine 2092, serine 2125, serine 2129, serine 2130, and serine 2132. 3 disordered regions span residues 2146–2190 (SPFH…GIKG), 2202–2652 (KIRS…PPVS), and 2664–2845 (CPIN…VTSV). Threonine 2151 carries the phosphothreonine modification. Residues 2167–2674 (ILKPGEKSTL…PINNPRSGRS (508 aa)) form a basic region region. The span at 2169-2187 (KPGEKSTLEAKKIESENKG) shows a compositional bias: basic and acidic residues. 2 stretches are compositionally biased toward polar residues: residues 2203–2223 (IRSN…NMPS) and 2257–2272 (ASKS…TSPR). Phosphoserine is present on residues serine 2260, serine 2270, and serine 2283. A compositionally biased stretch (low complexity) spans 2290 to 2311 (SQISGSNKGSSRSGSRDSTPSR). Residues 2312–2331 (PTQQPLSRPMQSPGRNSISP) show a composition bias toward polar residues. Residues 2348-2369 (TSSPSTASTKSSGSGKMSYTSP) are compositionally biased toward low complexity. A compositionally biased stretch (polar residues) spans 2370–2411 (GRQLSQQNLTKQASLSKNASSIPRSESASKGLNQMSNGNGSN). 2 stretches are compositionally biased toward low complexity: residues 2417–2429 (SRMS…GSES) and 2459–2477 (SASF…PTRS). Residues serine 2473 and serine 2535 each carry the phosphoserine modification. The interval 2475-2845 (TRSQAQTPVL…HSGSYLVTSV (371 aa)) is interaction with DLG1. Positions 2518–2535 (NDGRPTKRHDIARSHSES) are enriched in basic and acidic residues. Positions 2555–2568 (SSSLPRVSTWRRTG) are enriched in polar residues. Position 2569 is a phosphoserine (serine 2569). Residues 2569 to 2579 (SSSSILSASSE) show a composition bias toward low complexity. Basic and acidic residues predominate over residues 2580–2592 (SSEKAKSEDERHV). Positions 2626–2638 (ASQSASSGAASGA) are enriched in low complexity. Residues 2668–2679 (NPRSGRSPTGNT) show a composition bias toward polar residues. Residues serine 2671 and serine 2674 each carry the phosphoserine modification. Residues 2674–2845 (SPTGNTPPVI…HSGSYLVTSV (172 aa)) form an interaction with MAPRE1 region. Threonine 2679 bears the Phosphothreonine mark. The span at 2684–2694 (DSVSEKGSSSI) shows a compositional bias: low complexity. Residues 2695-2705 (KDSKDSKDTHG) show a composition bias toward basic and acidic residues. Residues 2706-2716 (KQSVGSGSPVQ) show a composition bias toward polar residues. Phosphoserine is present on residues serine 2713 and serine 2726. Positions 2765–2776 (SSSSSSKHSSPS) are enriched in low complexity. Residues 2786–2814 (FNYNPSPRKSSADSTSARPSQIPTPVSTN) are compositionally biased toward polar residues. Serine 2791 is subject to Phosphoserine. The short motif at 2805-2808 (SQIP) is the Microtubule tip localization signal element. A PDZ-binding motif is present at residues 2843-2845 (TSV).

Belongs to the adenomatous polyposis coli (APC) family. In terms of assembly, forms homooligomers. Found in a complex consisting of ARHGEF4, APC and CTNNB1. Found in a complex composed of MACF1, APC, AXIN1, CTNNB1 and GSK3B. The complex composed, at least, of APC, CTNNB1 and GSK3B interacts with JPT1; the interaction requires the inactive form of GSK3B (phosphorylated at 'Ser-9'). Interacts with APC2. Interacts with DLG1 (via PDZ domains) and DLG3 (via PDZ domains). Interacts with alpha- and beta-catenins. Interacts with AXIN1 (via RGS domain). Interacts with ARHGEF4 (via N-terminus). Interacts (via C-terminal residues 2674-2843) with MAPRE1 (via C-terminal residues 206-211); the interaction inhibits association with and bundling of F-actin. Interacts with MAPRE2 and MAPRE3 (via C-terminus). Interacts with DIAPH1; DIAPH1 acts as a scaffold protein for MAPRE1 and APC to stabilize microtubules and promote cell migration. Interacts with DIAPH2. Interacts with SCRIB; may mediate targeting to adherens junctions of epithelial cells. Interacts with SPATA13 (via N-terminus and SH3 domain). Interacts with ASAP1 (via SH3 domain). Interacts (at the cell membrane) with AMER1 and AMER2 (via ARM repeats). Interacts with KHDRBS1. Interacts with actin; binds both to F-actin and actin filament bundles. In terms of processing, phosphorylated; phosphorylation enhances the F-actin bundling activity. Phosphorylated by GSK3B. Ubiquitinated, leading to its degradation by the proteasome. Ubiquitination is facilitated by Axin. Deubiquitinated by ZRANB1/TRABID. Expressed in liver, spleen, kidney, heart, lung, brain, stomach, intestine, testis and ovary.

It localises to the cell junction. The protein resides in the adherens junction. Its subcellular location is the cytoplasm. The protein localises to the cytoskeleton. It is found in the cell projection. It localises to the lamellipodium. The protein resides in the ruffle membrane. Its subcellular location is the cell membrane. Its function is as follows. Tumor suppressor. Promotes rapid degradation of CTNNB1 and participates in Wnt signaling as a negative regulator. APC activity is correlated with its phosphorylation state. Activates the GEF activity of SPATA13 and ARHGEF4. Plays a role in hepatocyte growth factor (HGF)-induced cell migration. Required for MMP9 up-regulation via the JNK signaling pathway in colorectal tumor cells. Associates with both microtubules and actin filaments, components of the cytoskeleton. Plays a role in mediating the organization of F-actin into ordered bundles. Functions downstream of Rho GTPases and DIAPH1 to selectively stabilize microtubules. Acts as a mediator of ERBB2-dependent stabilization of microtubules at the cell cortex. It is required for the localization of MACF1 to the cell membrane and this localization of MACF1 is critical for its function in microtubule stabilization. The protein is Adenomatous polyposis coli protein (Apc) of Mus musculus (Mouse).